The chain runs to 164 residues: CDP-archaeol synthase (164 aa).

Transmembrane regions (helical) follow at residues 3–23 (LTVF…AVFA), 55–75 (AIGI…YHVI), 77–97 (VFDA…GAFI), and 122–142 (FLVY…AVVI).

The protein belongs to the CDP-archaeol synthase family. Mg(2+) is required as a cofactor.

It localises to the cell membrane. The catalysed reaction is 2,3-bis-O-(geranylgeranyl)-sn-glycerol 1-phosphate + CTP + H(+) = CDP-2,3-bis-O-(geranylgeranyl)-sn-glycerol + diphosphate. The protein operates within membrane lipid metabolism; glycerophospholipid metabolism. Functionally, catalyzes the formation of CDP-2,3-bis-(O-geranylgeranyl)-sn-glycerol (CDP-archaeol) from 2,3-bis-(O-geranylgeranyl)-sn-glycerol 1-phosphate (DGGGP) and CTP. This reaction is the third ether-bond-formation step in the biosynthesis of archaeal membrane lipids. In Pyrobaculum aerophilum (strain ATCC 51768 / DSM 7523 / JCM 9630 / CIP 104966 / NBRC 100827 / IM2), this protein is CDP-archaeol synthase.